Here is a 209-residue protein sequence, read N- to C-terminus: C-type lectin domain family 6 member A (209 aa).

At 1–20 (MVQERHPQRKGVCWTLRLWS) the chain is on the cytoplasmic side. Residues 21–43 (TAVISMLLLSTCFIASCMVTYQF) form a helical; Signal-anchor for type II membrane protein membrane-spanning segment. Topologically, residues 44–209 (TMEKPNRRLS…SICETKKIYL (166 aa)) are extracellular. Cystine bridges form between C64–C78 and C79–C90. In terms of domain architecture, C-type lectin spans 86-203 (FGSSCYLIST…CDSKHNSICE (118 aa)). Ca(2+) contacts are provided by V116, N118, and E122. N131 is a glycosylation site (N-linked (GlcNAc...) asparagine). Residues E168, N170, and E174 each contribute to the Ca(2+) site. Alpha-D-mannopyranose contacts are provided by residues 168–170 (EPN), E174, W182, and 190–191 (ND). C176 and C194 form a disulfide bridge. N190, D191, and E203 together coordinate Ca(2+).

In terms of assembly, associated with FCER1G. Heterodimer with CLEC4D; this heterodimer forms a pattern recognition receptor (PRR) against fungal infection.

It localises to the cell membrane. Calcium-dependent lectin that acts as a pattern recognition receptor (PRR) of the innate immune system: specifically recognizes and binds alpha-mannans on C.albicans hypheas. Binding of C.albicans alpha-mannans to this receptor complex leads to phosphorylation of the immunoreceptor tyrosine-based activation motif (ITAM) of FCER1G, triggering activation of SYK, CARD9 and NF-kappa-B, consequently driving maturation of antigen-presenting cells and shaping antigen-specific priming of T-cells toward effector T-helper 1 and T-helper 17 cell subtypes. Also recognizes, in a mannose-dependent manner, allergens from house dust mite and fungi, by promoting cysteinyl leukotriene production. Recognizes soluble elements from the eggs of Shistosoma mansoni altering adaptive immune responses. In Rattus norvegicus (Rat), this protein is C-type lectin domain family 6 member A (CLEC6A).